The primary structure comprises 307 residues: Agmatinase (307 aa).

Residues His128, Asp151, His153, Asp155, Asp232, and Asp234 each coordinate Mn(2+).

Belongs to the arginase family. Agmatinase subfamily. Mn(2+) is required as a cofactor.

The catalysed reaction is agmatine + H2O = urea + putrescine. It functions in the pathway amine and polyamine biosynthesis; putrescine biosynthesis via agmatine pathway; putrescine from agmatine: step 1/1. Functionally, catalyzes the formation of putrescine from agmatine. This is Agmatinase from Photorhabdus laumondii subsp. laumondii (strain DSM 15139 / CIP 105565 / TT01) (Photorhabdus luminescens subsp. laumondii).